The following is a 303-amino-acid chain: UDP-3-O-acyl-N-acetylglucosamine deacetylase (303 aa).

Residues His-78, His-237, and Asp-241 each coordinate Zn(2+). Residue His-264 is the Proton donor of the active site.

The protein belongs to the LpxC family. Requires Zn(2+) as cofactor.

The enzyme catalyses a UDP-3-O-[(3R)-3-hydroxyacyl]-N-acetyl-alpha-D-glucosamine + H2O = a UDP-3-O-[(3R)-3-hydroxyacyl]-alpha-D-glucosamine + acetate. It participates in glycolipid biosynthesis; lipid IV(A) biosynthesis; lipid IV(A) from (3R)-3-hydroxytetradecanoyl-[acyl-carrier-protein] and UDP-N-acetyl-alpha-D-glucosamine: step 2/6. In terms of biological role, catalyzes the hydrolysis of UDP-3-O-myristoyl-N-acetylglucosamine to form UDP-3-O-myristoylglucosamine and acetate, the committed step in lipid A biosynthesis. In Pseudomonas paraeruginosa (strain DSM 24068 / PA7) (Pseudomonas aeruginosa (strain PA7)), this protein is UDP-3-O-acyl-N-acetylglucosamine deacetylase.